A 193-amino-acid polypeptide reads, in one-letter code: dCTP deaminase, dUMP-forming (193 aa).

Residues 107 to 112, D125, 133 to 135, Q154, and Y168 contribute to the dCTP site; these read RSSLGR and TLE. The active-site Proton donor/acceptor is the E135. The tract at residues 169–193 is disordered; it reads AESSGKYHGDERPSPSKMHLDFCRG. A compositionally biased stretch (basic and acidic residues) spans 173 to 193; it reads GKYHGDERPSPSKMHLDFCRG.

This sequence belongs to the dCTP deaminase family. Homotrimer.

It carries out the reaction dCTP + 2 H2O = dUMP + NH4(+) + diphosphate. Its pathway is pyrimidine metabolism; dUMP biosynthesis; dUMP from dCTP: step 1/1. Its function is as follows. Bifunctional enzyme that catalyzes both the deamination of dCTP to dUTP and the hydrolysis of dUTP to dUMP without releasing the toxic dUTP intermediate. The sequence is that of dCTP deaminase, dUMP-forming from Methanopyrus kandleri (strain AV19 / DSM 6324 / JCM 9639 / NBRC 100938).